Reading from the N-terminus, the 435-residue chain is Serine--tRNA ligase (435 aa).

242 to 244 (TAE) is an L-serine binding site. 273-275 (RSE) is an ATP binding site. E296 lines the L-serine pocket. 360-363 (EISS) provides a ligand contact to ATP. S396 contributes to the L-serine binding site.

This sequence belongs to the class-II aminoacyl-tRNA synthetase family. Type-1 seryl-tRNA synthetase subfamily. As to quaternary structure, homodimer. The tRNA molecule binds across the dimer.

It localises to the cytoplasm. The enzyme catalyses tRNA(Ser) + L-serine + ATP = L-seryl-tRNA(Ser) + AMP + diphosphate + H(+). It carries out the reaction tRNA(Sec) + L-serine + ATP = L-seryl-tRNA(Sec) + AMP + diphosphate + H(+). Its pathway is aminoacyl-tRNA biosynthesis; selenocysteinyl-tRNA(Sec) biosynthesis; L-seryl-tRNA(Sec) from L-serine and tRNA(Sec): step 1/1. Its function is as follows. Catalyzes the attachment of serine to tRNA(Ser). Is also able to aminoacylate tRNA(Sec) with serine, to form the misacylated tRNA L-seryl-tRNA(Sec), which will be further converted into selenocysteinyl-tRNA(Sec). This chain is Serine--tRNA ligase, found in Vibrio vulnificus (strain CMCP6).